A 1013-amino-acid chain; its full sequence is NHS-like protein 3 (1013 aa).

The residue at position 17 (K17) is a Phosphoserine. Residues 20 to 195 (SAKAESDNRQ…PPGSRDAVRI (176 aa)) form a disordered region. The segment covering 73–89 (QHQERQKLSKGGWDHGD) has biased composition (basic and acidic residues). 2 stretches are compositionally biased toward polar residues: residues 90–99 (TQSIQSSQTG) and 106–120 (SIYSQKSYMTESSTA). S92 is modified (phosphoserine). The residue at position 108 (Y108) is a Phosphotyrosine. S136, S143, and S159 each carry phosphoserine. At T160 the chain carries Phosphothreonine. Basic and acidic residues predominate over residues 168-178 (VQKELGLRNNR). Residue S213 is modified to Phosphoserine. The residue at position 318 (R318) is an Asymmetric dimethylarginine. Residues S320, S325, S328, S336, S337, S339, and S340 each carry the phosphoserine modification. The interval 330-1013 (RSLGRFSSAS…PGSDPQKKLV (684 aa)) is disordered. The span at 336–361 (SSASSPRPRSRNASSSSDNWSHSQSS) shows a compositional bias: low complexity. Residues 362-375 (ETIVSDGSTLSSKG) show a composition bias toward polar residues. Phosphoserine occurs at positions 398, 402, and 407. Residues 408 to 427 (TAETSDTASIRSSGQLSGRS) show a composition bias toward polar residues. Low complexity-rich tracts occupy residues 484–493 (VGAVSCPPSS) and 515–530 (RTLSPSSGYSSQSGTP). A Phosphothreonine modification is found at T529. Residue S543 is modified to Phosphoserine. Residues 564-577 (SVSSSLTSLCSSSS) are compositionally biased toward low complexity. Position 591 is a phosphothreonine (T591). The segment covering 600 to 614 (PPHPKVPAPFSPPPS) has biased composition (pro residues). A Phosphoserine modification is found at S610. Over residues 615-633 (KSKSSNQAAPVLAAPAVAP) the composition is skewed to low complexity. A compositionally biased stretch (polar residues) spans 635–657 (QVSTIDTSPASPSMPQTTLTPAQ). Residues S667 and S671 each carry the phosphoserine modification. Composition is skewed to pro residues over residues 668–683 (PPPSPPPSYHPPPPPT) and 706–716 (PSWPPPPPPAP). The segment covering 779-795 (PQKDSVGKHSGAPREDS) has biased composition (basic and acidic residues). Residues 814 to 829 (GASTGIPNPSPGSSAP) show a composition bias toward polar residues. A phosphoserine mark is found at S838, S842, and S848. Positions 859-873 (ASSLAASESPASALP) are enriched in low complexity. 3 positions are modified to phosphoserine: S909, S952, and S959. The segment covering 942-961 (KAPPPVARKPSVGVPPPSPS) has biased composition (pro residues). Residues 964 to 975 (RTESLTAPSTNG) show a composition bias toward polar residues.

Able to directly activate the TNF-NFkappaB signaling pathway. The polypeptide is NHS-like protein 3 (Nhsl3) (Mus musculus (Mouse)).